Here is a 396-residue protein sequence, read N- to C-terminus: 1-deoxy-D-xylulose 5-phosphate reductoisomerase (396 aa).

Residues T17, G18, S19, I20, N47, and N130 each contribute to the NADPH site. K131 is a binding site for 1-deoxy-D-xylulose 5-phosphate. E132 serves as a coordination point for NADPH. D156 contacts Mn(2+). Positions 157, 158, 182, and 205 each coordinate 1-deoxy-D-xylulose 5-phosphate. E158 lines the Mn(2+) pocket. NADPH is bound at residue G211. The 1-deoxy-D-xylulose 5-phosphate site is built by S218, N223, K224, and E227. E227 provides a ligand contact to Mn(2+).

It belongs to the DXR family. Mg(2+) is required as a cofactor. It depends on Mn(2+) as a cofactor.

The catalysed reaction is 2-C-methyl-D-erythritol 4-phosphate + NADP(+) = 1-deoxy-D-xylulose 5-phosphate + NADPH + H(+). It participates in isoprenoid biosynthesis; isopentenyl diphosphate biosynthesis via DXP pathway; isopentenyl diphosphate from 1-deoxy-D-xylulose 5-phosphate: step 1/6. Its function is as follows. Catalyzes the NADPH-dependent rearrangement and reduction of 1-deoxy-D-xylulose-5-phosphate (DXP) to 2-C-methyl-D-erythritol 4-phosphate (MEP). The protein is 1-deoxy-D-xylulose 5-phosphate reductoisomerase of Rhizobium johnstonii (strain DSM 114642 / LMG 32736 / 3841) (Rhizobium leguminosarum bv. viciae).